Reading from the N-terminus, the 391-residue chain is Flagellin (391 aa).

It belongs to the bacterial flagellin family.

Its subcellular location is the secreted. It is found in the bacterial flagellum. In terms of biological role, flagellin is the subunit protein which polymerizes to form the filaments of bacterial flagella. The protein is Flagellin (flaA) of Bordetella bronchiseptica (strain ATCC BAA-588 / NCTC 13252 / RB50) (Alcaligenes bronchisepticus).